Reading from the N-terminus, the 82-residue chain is Large ribosomal subunit protein bL27c (82 aa).

The segment at 1–22 (MAHKKGAGSTKNGRDSNSKRLG) is disordered.

It belongs to the bacterial ribosomal protein bL27 family.

The protein resides in the plastid. It is found in the chloroplast. In Chrysotila carterae (Marine alga), this protein is Large ribosomal subunit protein bL27c (rpl27).